Consider the following 264-residue polypeptide: 2-dehydro-3-deoxy-D-gluconate 5-dehydrogenase (264 aa).

Residue 14–38 (LVTGSTHGLGMAMAKGLGLAGATIV) participates in NAD(+) binding. Ser147 lines the substrate pocket. The active-site Proton acceptor is the Tyr160.

This sequence belongs to the short-chain dehydrogenases/reductases (SDR) family. As to quaternary structure, homotetramer.

The protein resides in the cytoplasm. It carries out the reaction 2-dehydro-3-deoxy-D-gluconate + NAD(+) = 3-deoxy-D-glycero-2,5-hexodiulosonate + NADH + H(+). 2-dehydro-3-deoxy-D-gluconate 5-dehydrogenase involved in ulvan degradation. Ulvan is the main polysaccharide component of the Ulvales (green seaweed) cell wall. It is composed of disaccharide building blocks comprising 3-sulfated rhamnose (Rha3S) linked to D-glucuronic acid (GlcA), L-iduronic acid (IduA), or D-xylose (Xyl). Catalyzes the reversible reduction of 2,5-diketo-3-deoxygluconate (DKII or 4,6-dihydroxy-2,5-dioxohexanoate) into 2-keto-3-deoxygluconate (KDG or 2-dehydro-3-deoxygluconate) with a concomitant oxidation of NADH. The polypeptide is 2-dehydro-3-deoxy-D-gluconate 5-dehydrogenase (kduD) (Formosa agariphila (strain DSM 15362 / KCTC 12365 / LMG 23005 / KMM 3901 / M-2Alg 35-1)).